The chain runs to 361 residues: Phosphoserine aminotransferase (361 aa).

R43 contributes to the L-glutamate binding site. Residues 77–78 (AS), W103, T152, D172, and Q195 each bind pyridoxal 5'-phosphate. An N6-(pyridoxal phosphate)lysine modification is found at K196. A pyridoxal 5'-phosphate-binding site is contributed by 237 to 238 (NT).

This sequence belongs to the class-V pyridoxal-phosphate-dependent aminotransferase family. SerC subfamily. In terms of assembly, homodimer. The cofactor is pyridoxal 5'-phosphate.

The protein localises to the cytoplasm. It catalyses the reaction O-phospho-L-serine + 2-oxoglutarate = 3-phosphooxypyruvate + L-glutamate. The enzyme catalyses 4-(phosphooxy)-L-threonine + 2-oxoglutarate = (R)-3-hydroxy-2-oxo-4-phosphooxybutanoate + L-glutamate. Its pathway is amino-acid biosynthesis; L-serine biosynthesis; L-serine from 3-phospho-D-glycerate: step 2/3. It functions in the pathway cofactor biosynthesis; pyridoxine 5'-phosphate biosynthesis; pyridoxine 5'-phosphate from D-erythrose 4-phosphate: step 3/5. Catalyzes the reversible conversion of 3-phosphohydroxypyruvate to phosphoserine and of 3-hydroxy-2-oxo-4-phosphonooxybutanoate to phosphohydroxythreonine. The polypeptide is Phosphoserine aminotransferase (Desulfatibacillum aliphaticivorans).